A 490-amino-acid chain; its full sequence is Ribulose bisphosphate carboxylase large chain (490 aa).

2 residues coordinate substrate: asparagine 127 and threonine 177. Lysine 179 acts as the Proton acceptor in catalysis. Position 181 (lysine 181) interacts with substrate. Mg(2+)-binding residues include lysine 205, aspartate 207, and glutamate 208. N6-carboxylysine is present on lysine 205. The Proton acceptor role is filled by histidine 297. The substrate site is built by arginine 298, histidine 330, and serine 382.

The protein belongs to the RuBisCO large chain family. Type I subfamily. As to quaternary structure, heterohexadecamer of 8 large chains and 8 small chains. Mg(2+) is required as a cofactor.

Its subcellular location is the plastid. It localises to the chloroplast. The enzyme catalyses 2 (2R)-3-phosphoglycerate + 2 H(+) = D-ribulose 1,5-bisphosphate + CO2 + H2O. The catalysed reaction is D-ribulose 1,5-bisphosphate + O2 = 2-phosphoglycolate + (2R)-3-phosphoglycerate + 2 H(+). In terms of biological role, ruBisCO catalyzes two reactions: the carboxylation of D-ribulose 1,5-bisphosphate, the primary event in carbon dioxide fixation, as well as the oxidative fragmentation of the pentose substrate in the photorespiration process. Both reactions occur simultaneously and in competition at the same active site. The polypeptide is Ribulose bisphosphate carboxylase large chain (Thalassiosira pseudonana (Marine diatom)).